A 66-amino-acid chain; its full sequence is Small ribosomal subunit protein bS21 (66 aa).

This sequence belongs to the bacterial ribosomal protein bS21 family.

This is Small ribosomal subunit protein bS21 from Rickettsia akari (strain Hartford).